A 338-amino-acid chain; its full sequence is Aspartate carbamoyltransferase catalytic subunit (338 aa).

Arg59 and Thr60 together coordinate carbamoyl phosphate. Lys87 contacts L-aspartate. Carbamoyl phosphate contacts are provided by Arg109, His142, and Gln145. 2 residues coordinate L-aspartate: Arg182 and Arg253. The carbamoyl phosphate site is built by Gly294 and Pro295.

The protein belongs to the aspartate/ornithine carbamoyltransferase superfamily. ATCase family. Heterododecamer (2C3:3R2) of six catalytic PyrB chains organized as two trimers (C3), and six regulatory PyrI chains organized as three dimers (R2).

The catalysed reaction is carbamoyl phosphate + L-aspartate = N-carbamoyl-L-aspartate + phosphate + H(+). The protein operates within pyrimidine metabolism; UMP biosynthesis via de novo pathway; (S)-dihydroorotate from bicarbonate: step 2/3. Its function is as follows. Catalyzes the condensation of carbamoyl phosphate and aspartate to form carbamoyl aspartate and inorganic phosphate, the committed step in the de novo pyrimidine nucleotide biosynthesis pathway. This chain is Aspartate carbamoyltransferase catalytic subunit, found in Prochlorococcus marinus (strain AS9601).